A 186-amino-acid chain; its full sequence is Small ribosomal subunit protein eS7 (186 aa).

It belongs to the eukaryotic ribosomal protein eS7 family. In terms of assembly, component of the small ribosomal subunit. Mature ribosomes consist of a small (40S) and a large (60S) subunit. The 40S subunit contains about 32 different proteins and 1 molecule of RNA (18S). The 60S subunit contains 45 different proteins and 3 molecules of RNA (25S, 5.8S and 5S).

The protein resides in the cytoplasm. In terms of biological role, component of the ribosome, a large ribonucleoprotein complex responsible for the synthesis of proteins in the cell. The small ribosomal subunit (SSU) binds messenger RNAs (mRNAs) and translates the encoded message by selecting cognate aminoacyl-transfer RNA (tRNA) molecules. The large subunit (LSU) contains the ribosomal catalytic site termed the peptidyl transferase center (PTC), which catalyzes the formation of peptide bonds, thereby polymerizing the amino acids delivered by tRNAs into a polypeptide chain. The nascent polypeptides leave the ribosome through a tunnel in the LSU and interact with protein factors that function in enzymatic processing, targeting, and the membrane insertion of nascent chains at the exit of the ribosomal tunnel. RPS7A is involved in nucleolar processing of pre-18S ribosomal RNA and ribosome assembly. This Candida albicans (strain SC5314 / ATCC MYA-2876) (Yeast) protein is Small ribosomal subunit protein eS7 (RPS7A).